We begin with the raw amino-acid sequence, 807 residues long: Ecotropic viral integration site 5 ortholog (807 aa).

The disordered stretch occupies residues 1-31; sequence MTLTTTTTASSAESQAKMDVKGGALPGEENL. Threonine 33 carries the phosphothreonine modification. Phosphoserine occurs at positions 58 and 64. Residues 116-300 form the Rab-GAP TBC domain; that stretch reads GIPHHFRAIV…RIMDVFLSEG (185 aa). Coiled-coil stretches lie at residues 352 to 463, 494 to 583, and 627 to 772; these read SIKL…ENNV, CLLE…ENQR, and REME…RGKF.

Interacts with Rab11.

It is found in the cytoplasm. It localises to the endosome. Functions as a GTPase-activating protein (GAP). During border cell migration in the ovary, acts as a GAP for Rab11 and is necessary for the maintenance of active receptor tyrosine kinases at the leading edge. The sequence is that of Ecotropic viral integration site 5 ortholog (Evi5) from Drosophila melanogaster (Fruit fly).